A 445-amino-acid polypeptide reads, in one-letter code: O-fucosyltransferase 23 (445 aa).

Residues 12-34 (IFSKSVACKCLVLVGIALFYRAL) traverse the membrane as a helical; Signal-anchor for type II membrane protein segment. Residues Asn-97 and Asn-179 are each glycosylated (N-linked (GlcNAc...) asparagine). 258–260 (HMR) is a substrate binding site. Asn-294 carries N-linked (GlcNAc...) asparagine glycosylation. A substrate-binding site is contributed by 374-375 (TF). A glycan (N-linked (GlcNAc...) asparagine) is linked at Asn-424.

This sequence belongs to the glycosyltransferase GT106 family. Expressed in dry pollen grains and germinating pollen grains.

Its subcellular location is the golgi apparatus membrane. The protein operates within glycan metabolism. Probable protein O-fucosyltransferase required for correct pollen tube penetration through the stigma-style interface. May be involved in protein O-glycosylation events during pollen-pistil interactions. The polypeptide is O-fucosyltransferase 23 (Arabidopsis thaliana (Mouse-ear cress)).